The following is a 625-amino-acid chain: Protein SUPPRESSOR OF GENE SILENCING 3 (625 aa).

3 disordered regions span residues 1–20, 30–148, and 161–195; these read MSSR…GYRP, AGTR…SAQH, and VDNA…QKSH. A compositionally biased stretch (polar residues) spans 54-70; sequence KPGNTSGKTWVSQNSNP. Low complexity predominate over residues 80-94; the sequence is GRGSNVSGRGNNVSG. The segment covering 161 to 188 has biased composition (acidic residues); the sequence is VDNASEEENDSDALDDSDDDLASDDYDS. 2 coiled-coil regions span residues 452–533 and 564–615; these read KNKL…QQQE and IEFQ…EQLM.

This sequence belongs to the SGS3 family. As to quaternary structure, interacts with begomoviruses protein V2. Interacts with SGIP1 in cytoplasmic granules.

It is found in the cytoplasm. It localises to the perinuclear region. The protein resides in the cytoplasmic granule. Functionally, required for post-transcriptional gene silencing and natural virus resistance. May bind nucleic acids and is essential for the biogenesis of trans-acting siRNAs but is not required for silencing induced by IR-PTGS. Involved in the juvenile-to-adult transition regulation. In case of begomoviruses infection, it is targeted by the viral protein V2 leading to suppression of post-transcriptional gene silencing. Involved in the mechanisms necessary for quick response to heat and subsequent heritable transgenerational memory of heat acclimation (global warming) such as early flowering and attenuated immunity; this process includes epigenetic regulation as well as post-transcriptional gene silencing (PTGS). In response to heat, HSFA2 is activated and promotes the expression of REF6 which in turn derepresses HSFA2, thus establishing an inheritable feedback loop able to trigger SGIP1 and subsequent SGIP1-mediated SGS3 degradation; this prevents the biosynthesis of trans-acting siRNA (tasiRNA) and leads to the release of HTT5, which drives early flowering but attenuates immunity. In Arabidopsis thaliana (Mouse-ear cress), this protein is Protein SUPPRESSOR OF GENE SILENCING 3.